Reading from the N-terminus, the 108-residue chain is Nucleoid-associated protein Csal_1459 (108 aa).

The segment covering 84 to 93 has biased composition (basic and acidic residues); the sequence is EETSRGRMEE. The disordered stretch occupies residues 84 to 108; that stretch reads EETSRGRMEEATEGMNLPPGFKMPF.

Belongs to the YbaB/EbfC family. As to quaternary structure, homodimer.

The protein resides in the cytoplasm. It localises to the nucleoid. Its function is as follows. Binds to DNA and alters its conformation. May be involved in regulation of gene expression, nucleoid organization and DNA protection. This Chromohalobacter salexigens (strain ATCC BAA-138 / DSM 3043 / CIP 106854 / NCIMB 13768 / 1H11) protein is Nucleoid-associated protein Csal_1459.